A 270-amino-acid polypeptide reads, in one-letter code: Putative serine acetyltransferase (270 aa).

This sequence belongs to the transferase hexapeptide repeat family.

It is found in the cytoplasm. The protein localises to the nucleus. The catalysed reaction is L-serine + acetyl-CoA = O-acetyl-L-serine + CoA. Its pathway is amino-acid biosynthesis; L-cysteine biosynthesis; L-cysteine from L-serine: step 1/2. The chain is Putative serine acetyltransferase from Schizosaccharomyces pombe (strain 972 / ATCC 24843) (Fission yeast).